A 20-amino-acid chain; its full sequence is Ribosome-inactivating protein (20 aa).

The tract at residues 1–20 (NVRFDLSGATSSSYKTFIKN) is disordered. The segment covering 8 to 20 (GATSSSYKTFIKN) has biased composition (polar residues).

This sequence belongs to the ribosome-inactivating protein family. Type 1 RIP subfamily.

It catalyses the reaction Endohydrolysis of the N-glycosidic bond at one specific adenosine on the 28S rRNA.. The polypeptide is Ribosome-inactivating protein (Cucurbita pepo (Vegetable marrow)).